Reading from the N-terminus, the 854-residue chain is DNA gyrase subunit A (854 aa).

The Topo IIA-type catalytic domain occupies 42–510; it reads LPEVRDGLKP…ADGQVSDEDL (469 aa). The O-(5'-phospho-DNA)-tyrosine intermediate role is filled by tyrosine 129. Residues 537 to 543 carry the GyrA-box motif; that stretch reads QKRGGKG.

This sequence belongs to the type II topoisomerase GyrA/ParC subunit family. In terms of assembly, heterotetramer, composed of two GyrA and two GyrB chains. In the heterotetramer, GyrA contains the active site tyrosine that forms a transient covalent intermediate with DNA, while GyrB binds cofactors and catalyzes ATP hydrolysis.

The protein resides in the cytoplasm. The catalysed reaction is ATP-dependent breakage, passage and rejoining of double-stranded DNA.. Its activity is regulated as follows. DNA supercoiling is inhibited by the coumarin antibiotic novobiocin. Also inhibited by the fluoroquinolones ciprofloxacin and moxifloxacin. In terms of biological role, a type II topoisomerase that negatively supercoils closed circular double-stranded (ds) DNA in an ATP-dependent manner to modulate DNA topology and maintain chromosomes in an underwound state; also catalyzes the interconversion of other topological isomers of double-stranded DNA rings, including catenanes. At comparable concentrations has a stronger decatenation activity than E.coli, which is inhibited by ciprofloxacin and novobiocin. Cleaves dsDNA at the sequence 5'-AT/GGCC-3', leaving a 4 base overhang. Relaxes negatively supercoiled DNA in an ATP-independent manner. Its function is as follows. Negative supercoiling favors strand separation, and DNA replication, transcription, recombination and repair, all of which involve strand separation. Type II topoisomerases break and join 2 DNA strands simultaneously in an ATP-dependent manner. This is DNA gyrase subunit A from Mycolicibacterium smegmatis (Mycobacterium smegmatis).